We begin with the raw amino-acid sequence, 325 residues long: Tetraacyldisaccharide 4'-kinase (325 aa).

ATP is bound at residue 58–65 (TVGGSGKT).

The protein belongs to the LpxK family.

The enzyme catalyses a lipid A disaccharide + ATP = a lipid IVA + ADP + H(+). It participates in glycolipid biosynthesis; lipid IV(A) biosynthesis; lipid IV(A) from (3R)-3-hydroxytetradecanoyl-[acyl-carrier-protein] and UDP-N-acetyl-alpha-D-glucosamine: step 6/6. Functionally, transfers the gamma-phosphate of ATP to the 4'-position of a tetraacyldisaccharide 1-phosphate intermediate (termed DS-1-P) to form tetraacyldisaccharide 1,4'-bis-phosphate (lipid IVA). This Coxiella burnetii (strain CbuK_Q154) (Coxiella burnetii (strain Q154)) protein is Tetraacyldisaccharide 4'-kinase.